Reading from the N-terminus, the 364-residue chain is Putative agmatine deiminase 1 (364 aa).

Cys356 acts as the Amidino-cysteine intermediate in catalysis.

It belongs to the agmatine deiminase family.

It carries out the reaction agmatine + H2O = N-carbamoylputrescine + NH4(+). The sequence is that of Putative agmatine deiminase 1 from Listeria monocytogenes serotype 4b (strain F2365).